Reading from the N-terminus, the 1068-residue chain is Retinoblastoma-like protein 1 (1068 aa).

Threonine 332 bears the Phosphothreonine; by CDK2 mark. A Phosphothreonine; by CDK4 modification is found at threonine 369. Threonine 385 carries the phosphothreonine; by CDK2 modification. The domain A stretch occupies residues 385-584 (TPVASATQSV…WEALQVSANK (200 aa)). A pocket; binds T and E1A region spans residues 385–949 (TPVASATQSV…GRVKSFALKY (565 aa)). The interval 585-780 (VPTCEEVIFP…AQEVHSTGIN (196 aa)) is spacer. Serine 640 is modified (phosphoserine; by CDK2 and CDK4). Serine 650 and serine 749 each carry phosphoserine. Residue serine 762 is modified to Phosphoserine; by CDK2. Residues 781–949 (RPKRTGSLAL…GRVKSFALKY (169 aa)) form a domain B region. Serine 964 and serine 975 each carry phosphoserine; by CDK2 and CDK4. Phosphoserine; by CDK2 is present on serine 988. At threonine 997 the chain carries Phosphothreonine; by CDK2. Phosphoserine; by CDK2 is present on serine 1009. Position 1041 is a phosphoserine (serine 1041).

Belongs to the retinoblastoma protein (RB) family. As to quaternary structure, component of the DREAM complex (also named LINC complex) at least composed of E2F4, E2F5, LIN9, LIN37, LIN52, LIN54, MYBL1, MYBL2, RBL1, RBL2, RBBP4, TFDP1 and TFDP2. The complex exists in quiescent cells where it represses cell cycle-dependent genes. It dissociates in S phase when LIN9, LIN37, LIN52 and LIN54 form a subcomplex that binds to MYBL2. Interacts with AATF. Interacts with KDM5A. Interacts with KMT5B and KMT5C. Interacts with USP4. Interacts with RBBP9. (Microbial infection) Interacts with SV40 and JC virus large T antigens. Large T antigen, but not E1A, binds only to the unphosphorylated form. In terms of assembly, (Microbial infection) Interacts with JC virus small t antigen. Post-translationally, cell-cycle arrest properties are inactivated by phosphorylation on Thr-332, Ser-640, Ser-964 and Ser-975 by CDK4.

The protein resides in the nucleus. Functionally, key regulator of entry into cell division. Directly involved in heterochromatin formation by maintaining overall chromatin structure and, in particular, that of constitutive heterochromatin by stabilizing histone methylation. Recruits and targets histone methyltransferases KMT5B and KMT5C, leading to epigenetic transcriptional repression. Controls histone H4 'Lys-20' trimethylation. Probably acts as a transcription repressor by recruiting chromatin-modifying enzymes to promoters. Potent inhibitor of E2F-mediated trans-activation. May act as a tumor suppressor. In Homo sapiens (Human), this protein is Retinoblastoma-like protein 1 (RBL1).